The chain runs to 182 residues: Adenine phosphoribosyltransferase (182 aa).

It belongs to the purine/pyrimidine phosphoribosyltransferase family. As to quaternary structure, homodimer.

The protein localises to the cytoplasm. It carries out the reaction AMP + diphosphate = 5-phospho-alpha-D-ribose 1-diphosphate + adenine. The protein operates within purine metabolism; AMP biosynthesis via salvage pathway; AMP from adenine: step 1/1. In terms of biological role, catalyzes a salvage reaction resulting in the formation of AMP, that is energically less costly than de novo synthesis. The polypeptide is Adenine phosphoribosyltransferase (Pseudomonas entomophila (strain L48)).